Consider the following 397-residue polypeptide: Elongation factor Tu (397 aa).

Positions 10-207 (LPHVNVGTIG…TLDSYIPEPV (198 aa)) constitute a tr-type G domain. The segment at 19-26 (GHVDHGKT) is G1. 19-26 (GHVDHGKT) provides a ligand contact to GTP. Thr-26 contacts Mg(2+). A G2 region spans residues 60 to 64 (GITIN). The interval 81–84 (DCPG) is G3. Residues 81–85 (DCPGH) and 136–139 (NKAD) each bind GTP. The interval 136–139 (NKAD) is G4. Residues 174 to 176 (SAR) form a G5 region.

It belongs to the TRAFAC class translation factor GTPase superfamily. Classic translation factor GTPase family. EF-Tu/EF-1A subfamily. Monomer.

The protein resides in the cytoplasm. It carries out the reaction GTP + H2O = GDP + phosphate + H(+). In terms of biological role, GTP hydrolase that promotes the GTP-dependent binding of aminoacyl-tRNA to the A-site of ribosomes during protein biosynthesis. In Pseudomonas syringae pv. syringae (strain B728a), this protein is Elongation factor Tu.